A 613-amino-acid polypeptide reads, in one-letter code: Isocitrate dehydrogenase kinase/phosphatase (613 aa).

Residues 328 to 334 (APGIRGL) and Lys349 contribute to the ATP site. The active site involves Asp384.

Belongs to the AceK family.

The protein resides in the cytoplasm. The enzyme catalyses L-seryl-[isocitrate dehydrogenase] + ATP = O-phospho-L-seryl-[isocitrate dehydrogenase] + ADP + H(+). In terms of biological role, bifunctional enzyme which can phosphorylate or dephosphorylate isocitrate dehydrogenase (IDH) on a specific serine residue. This is a regulatory mechanism which enables bacteria to bypass the Krebs cycle via the glyoxylate shunt in response to the source of carbon. When bacteria are grown on glucose, IDH is fully active and unphosphorylated, but when grown on acetate or ethanol, the activity of IDH declines drastically concomitant with its phosphorylation. This Cupriavidus necator (strain ATCC 17699 / DSM 428 / KCTC 22496 / NCIMB 10442 / H16 / Stanier 337) (Ralstonia eutropha) protein is Isocitrate dehydrogenase kinase/phosphatase.